The following is a 298-amino-acid chain: Putative glycylpeptide N-tetradecanoyltransferase (298 aa).

The protein belongs to the NMT family.

The catalysed reaction is N-terminal glycyl-[protein] + tetradecanoyl-CoA = N-tetradecanoylglycyl-[protein] + CoA + H(+). Its function is as follows. Adds a myristoyl group to the N-terminal glycine residue of certain proteins. This Melanoplus sanguinipes (Migratory grasshopper) protein is Putative glycylpeptide N-tetradecanoyltransferase.